Consider the following 532-residue polypeptide: Flavin-containing monooxygenase 1 (532 aa).

Position 2 is an N-acetylalanine (Ala-2). Residues 2-510 lie on the Lumenal side of the membrane; that stretch reads AKRVAIVGAG…TRIVKESPSP (509 aa). Residues 9 to 13, Glu-32, 40 to 41, and 61 to 62 each bind FAD; these read GAGVS, LW, and NS. NADP(+) is bound at residue 60–61; the sequence is SN. N-linked (GlcNAc...) (high mannose) asparagine glycosylation is present at Asn-120. 195-198 contacts NADP(+); it reads SGTD. The helical transmembrane segment at 511–531 threads the bilayer; that stretch reads FASLLKLFSFLALLVAIFQIF. A topological domain (cytoplasmic) is located at residue Leu-532.

This sequence belongs to the FMO family. The cofactor is FAD. As to expression, liver.

Its subcellular location is the endoplasmic reticulum membrane. It carries out the reaction hypotaurine + NADPH + O2 + H(+) = taurine + NADP(+) + H2O. It catalyses the reaction hypotaurine + NADH + O2 + H(+) = taurine + NAD(+) + H2O. The enzyme catalyses trimethylamine + NADPH + O2 = trimethylamine N-oxide + NADP(+) + H2O. The catalysed reaction is N,N-dimethylaniline + NADPH + O2 + H(+) = N,N-dimethylaniline N-oxide + NADP(+) + H2O. In terms of biological role, broad spectrum monooxygenase that catalyzes the oxygenation of a wide variety of nitrogen- and sulfur-containing compounds including xenobiotics. Catalyzes the S-oxygenation of hypotaurine to produce taurine, an organic osmolyte involved in cell volume regulation as well as a variety of cytoprotective and developmental processes. In vitro, catalyzes the N-oxygenation of trimethylamine (TMA) to produce trimethylamine N-oxide (TMAO) and could therefore participate to the detoxification of this compound that is generated by the action of gut microbiota from dietary precursors such as choline, choline containing compounds, betaine or L-carnitine. This Sus scrofa (Pig) protein is Flavin-containing monooxygenase 1 (FMO1).